We begin with the raw amino-acid sequence, 702 residues long: Phosphoribosylformylglycinamidine synthase subunit PurL (702 aa).

Residue His36 is part of the active site. ATP-binding residues include Tyr39 and Lys80. Glu82 provides a ligand contact to Mg(2+). Residues 83-86 (SHNH) and Arg105 each bind substrate. The Proton acceptor role is filled by His84. Asp106 lines the Mg(2+) pocket. Substrate is bound at residue Gln225. Asp251 contributes to the Mg(2+) binding site. Residue 293-295 (ETQ) participates in substrate binding. Asp468 and Gly505 together coordinate ATP. Residue Ser508 coordinates substrate.

The protein belongs to the FGAMS family. As to quaternary structure, monomer. Part of the FGAM synthase complex composed of 1 PurL, 1 PurQ and 2 PurS subunits.

Its subcellular location is the cytoplasm. The enzyme catalyses N(2)-formyl-N(1)-(5-phospho-beta-D-ribosyl)glycinamide + L-glutamine + ATP + H2O = 2-formamido-N(1)-(5-O-phospho-beta-D-ribosyl)acetamidine + L-glutamate + ADP + phosphate + H(+). It participates in purine metabolism; IMP biosynthesis via de novo pathway; 5-amino-1-(5-phospho-D-ribosyl)imidazole from N(2)-formyl-N(1)-(5-phospho-D-ribosyl)glycinamide: step 1/2. Part of the phosphoribosylformylglycinamidine synthase complex involved in the purines biosynthetic pathway. Catalyzes the ATP-dependent conversion of formylglycinamide ribonucleotide (FGAR) and glutamine to yield formylglycinamidine ribonucleotide (FGAM) and glutamate. The FGAM synthase complex is composed of three subunits. PurQ produces an ammonia molecule by converting glutamine to glutamate. PurL transfers the ammonia molecule to FGAR to form FGAM in an ATP-dependent manner. PurS interacts with PurQ and PurL and is thought to assist in the transfer of the ammonia molecule from PurQ to PurL. This Metallosphaera sedula (strain ATCC 51363 / DSM 5348 / JCM 9185 / NBRC 15509 / TH2) protein is Phosphoribosylformylglycinamidine synthase subunit PurL.